The sequence spans 139 residues: Arsenate reductase (139 aa).

Active-site nucleophile residues include cysteine 10, cysteine 82, and cysteine 89. Disulfide bonds link cysteine 10-cysteine 82 and cysteine 82-cysteine 89.

The protein belongs to the low molecular weight phosphotyrosine protein phosphatase family. Thioredoxin-coupled ArsC subfamily.

The protein localises to the cytoplasm. The enzyme catalyses arsenate + [thioredoxin]-dithiol + H(+) = arsenite + [thioredoxin]-disulfide + H2O. Functionally, catalyzes the reduction of arsenate [As(V)] to arsenite [As(III)]. The chain is Arsenate reductase from Halalkalibacterium halodurans (strain ATCC BAA-125 / DSM 18197 / FERM 7344 / JCM 9153 / C-125) (Bacillus halodurans).